We begin with the raw amino-acid sequence, 785 residues long: Ubiquitin carboxyl-terminal hydrolase 1 (785 aa).

2 disordered regions span residues 1–21 (MPGV…SKKN) and 33–52 (TKRA…ASEY). Over residues 7–16 (SESNGLSRGS) the composition is skewed to polar residues. Residues Ser-16, Ser-42, and Ser-67 each carry the phosphoserine modification. The 705-residue stretch at 81 to 785 (VGLNNLGNTC…TPYLLFYKKL (705 aa)) folds into the USP domain. Catalysis depends on Cys-90, which acts as the Nucleophile. Composition is skewed to basic and acidic residues over residues 258 to 275 (EDFK…KSDT) and 286 to 298 (LSKE…ENQR). Residues 258–336 (EDFKEKLPKG…SPRPSQKKSR (79 aa)) form a disordered region. Phosphoserine occurs at positions 313 and 475. Catalysis depends on His-593, which acts as the Proton acceptor. The tract at residues 693-723 (TAFAENRNSETSDTTGTHESDRNKESSDQTG) is disordered. Positions 708-719 (GTHESDRNKESS) are enriched in basic and acidic residues. Residue Ser-768 is modified to Phosphoserine.

This sequence belongs to the peptidase C19 family. As to quaternary structure, interacts with FANCD2 and PCNA. Interacts with WDR48. Interacts with ATAD5; the interaction regulates USP1-mediated PCNA deubiquitination. Post-translationally, autocatalytic cleavage of USP1 following UV irradiation inactivates it, leading to an increase in ubiquitinated PCNA, recruitment of POLH and translesion synthesis. In terms of processing, ubiquitinated by the CRL2(KLHDC2) complex following autocatalytic cleavage, leading to its degradation: the CRL2(KLHDC2) complex recognizes the diglycine (Gly-Gly) at the C-terminus.

It localises to the nucleus. The enzyme catalyses Thiol-dependent hydrolysis of ester, thioester, amide, peptide and isopeptide bonds formed by the C-terminal Gly of ubiquitin (a 76-residue protein attached to proteins as an intracellular targeting signal).. Its function is as follows. Negative regulator of DNA damage repair which specifically deubiquitinates monoubiquitinated FANCD2. Also involved in PCNA-mediated translesion synthesis (TLS) by deubiquitinating monoubiquitinated PCNA. Has almost no deubiquitinating activity by itself and requires the interaction with WDR48 to have a high activity. This is Ubiquitin carboxyl-terminal hydrolase 1 (USP1) from Homo sapiens (Human).